A 111-amino-acid polypeptide reads, in one-letter code: Small ribosomal subunit protein bS16 (111 aa).

The protein belongs to the bacterial ribosomal protein bS16 family.

This Rickettsia prowazekii (strain Madrid E) protein is Small ribosomal subunit protein bS16.